A 295-amino-acid chain; its full sequence is Iodotyrosine deiodinase (295 aa).

Residues 3–23 form a helical membrane-spanning segment; sequence VFSSLTPVFVAVLCVIIGFLF. Positions 29–81 are disordered; sequence KESRSKQKPSDQTARPWVDEDLQDDTEISTKDNEENNEDWMDTTDEENLPHVP. Positions 63–75 are enriched in acidic residues; that stretch reads ENNEDWMDTTDEE. Residues 106-110, serine 134, and 134-135 contribute to the FMN site; these read RRSVR and SG. 4 residues coordinate 3-iodo-L-tyrosine: alanine 136, glutamate 163, tyrosine 167, and lysine 188. FMN contacts are provided by residues 243–245 and arginine 285; that span reads TTT.

Belongs to the nitroreductase family. Requires FMN as cofactor.

It localises to the membrane. It carries out the reaction 2 iodide + L-tyrosine + 2 NADP(+) = 3,5-diiodo-L-tyrosine + 2 NADPH + H(+). It catalyses the reaction iodide + L-tyrosine + NADP(+) = 3-iodo-L-tyrosine + NADPH. The enzyme catalyses 3-iodo-L-tyrosine + iodide + NADP(+) = 3,5-diiodo-L-tyrosine + NADPH + H(+). The catalysed reaction is L-tyrosine + chloride + NADP(+) = 3-chloro-L-tyrosine + NADPH. It carries out the reaction bromide + L-tyrosine + NADP(+) = 3-bromo-L-tyrosine + NADPH. Catalyzes the dehalogenation of halotyrosines such as 3,5-diiodo-L-tyrosine. Likely to also catalyze the dehalogenation of other halotyrosines such as 3-bromo-L-tyrosine, 3-chloro-L-tyrosine and 3-iodo-L-tyrosine. This is Iodotyrosine deiodinase (iyd) from Danio rerio (Zebrafish).